A 245-amino-acid chain; its full sequence is Eukaryotic translation initiation factor 3 subunit K (245 aa).

The region spanning 46–227 (YDCYANLALL…EAKGTVVREN (182 aa)) is the PCI domain.

Belongs to the eIF-3 subunit K family. Component of the eukaryotic translation initiation factor 3 (eIF-3) complex.

The protein resides in the cytoplasm. In terms of biological role, component of the eukaryotic translation initiation factor 3 (eIF-3) complex, which is involved in protein synthesis of a specialized repertoire of mRNAs and, together with other initiation factors, stimulates binding of mRNA and methionyl-tRNAi to the 40S ribosome. The eIF-3 complex specifically targets and initiates translation of a subset of mRNAs involved in cell proliferation. This Phaeosphaeria nodorum (strain SN15 / ATCC MYA-4574 / FGSC 10173) (Glume blotch fungus) protein is Eukaryotic translation initiation factor 3 subunit K.